Here is a 44-residue protein sequence, read N- to C-terminus: Protein PsbN (44 aa).

The helical transmembrane segment at 6 to 26 (FFFTFFLWFLLLSATGYSIYV) threads the bilayer.

This sequence belongs to the PsbN family.

Its subcellular location is the plastid. The protein localises to the chloroplast thylakoid membrane. In terms of biological role, may play a role in photosystem I and II biogenesis. The chain is Protein PsbN from Tetradesmus obliquus (Green alga).